A 162-amino-acid polypeptide reads, in one-letter code: MHLADLIETTLIGMGYELVELERAPAGLLRVYIDQPETGIVIEDCEKVSRQLTHVLTVENVDYERLEVSSPGLDRPLKKLADFVRFAGAEVRVTLRLPVNGQKNFVGILCEPAGDAGAEKIGLEFEGKDGPALLEFAISDVDRARLVPVIDFKGNQRKGNKQ.

Belongs to the RimP family.

It localises to the cytoplasm. Required for maturation of 30S ribosomal subunits. The sequence is that of Ribosome maturation factor RimP from Cupriavidus metallidurans (strain ATCC 43123 / DSM 2839 / NBRC 102507 / CH34) (Ralstonia metallidurans).